Reading from the N-terminus, the 339-residue chain is Phenylalanine--tRNA ligase alpha subunit (339 aa).

Glu253 provides a ligand contact to Mg(2+).

This sequence belongs to the class-II aminoacyl-tRNA synthetase family. Phe-tRNA synthetase alpha subunit type 1 subfamily. In terms of assembly, tetramer of two alpha and two beta subunits. The cofactor is Mg(2+).

It localises to the cytoplasm. The enzyme catalyses tRNA(Phe) + L-phenylalanine + ATP = L-phenylalanyl-tRNA(Phe) + AMP + diphosphate + H(+). This is Phenylalanine--tRNA ligase alpha subunit from Thioalkalivibrio sulfidiphilus (strain HL-EbGR7).